Reading from the N-terminus, the 165-residue chain is Glycine cleavage system H protein, mitochondrial (165 aa).

The transit peptide at 1–31 (MALRIWASSTAKALRLSSASRPHFSPLFRCF) directs the protein to the mitochondrion. In terms of domain architecture, Lipoyl-binding spans 55–137 (VATIGITDHA…YEDGWMIKVK (83 aa)). Lys96 carries the post-translational modification N6-lipoyllysine.

Belongs to the GcvH family. In terms of assembly, the glycine cleavage system is composed of four components that only loosely associate: the P protein (EC 1.4.4.2), the T protein (EC 2.1.2.10), the L protein (EC 1.8.1.4) and the lipoyl-bearing H protein. (R)-lipoate is required as a cofactor. As to expression, expressed in roots, stems and leaves.

The protein localises to the mitochondrion. The glycine cleavage system catalyzes the degradation of glycine. The H protein shuttles the methylamine group of glycine from the P protein to the T protein. This chain is Glycine cleavage system H protein, mitochondrial (GDCSH), found in Flaveria trinervia (Clustered yellowtops).